Reading from the N-terminus, the 232-residue chain is Phosphatidylserine decarboxylase proenzyme (232 aa).

Ser190 (schiff-base intermediate with substrate; via pyruvic acid) is an active-site residue. Ser190 carries the post-translational modification Pyruvic acid (Ser); by autocatalysis.

It belongs to the phosphatidylserine decarboxylase family. PSD-A subfamily. As to quaternary structure, heterodimer of a large membrane-associated beta subunit and a small pyruvoyl-containing alpha subunit. It depends on pyruvate as a cofactor. Post-translationally, is synthesized initially as an inactive proenzyme. Formation of the active enzyme involves a self-maturation process in which the active site pyruvoyl group is generated from an internal serine residue via an autocatalytic post-translational modification. Two non-identical subunits are generated from the proenzyme in this reaction, and the pyruvate is formed at the N-terminus of the alpha chain, which is derived from the carboxyl end of the proenzyme. The post-translation cleavage follows an unusual pathway, termed non-hydrolytic serinolysis, in which the side chain hydroxyl group of the serine supplies its oxygen atom to form the C-terminus of the beta chain, while the remainder of the serine residue undergoes an oxidative deamination to produce ammonia and the pyruvoyl prosthetic group on the alpha chain.

Its subcellular location is the cell membrane. It catalyses the reaction a 1,2-diacyl-sn-glycero-3-phospho-L-serine + H(+) = a 1,2-diacyl-sn-glycero-3-phosphoethanolamine + CO2. Its pathway is phospholipid metabolism; phosphatidylethanolamine biosynthesis; phosphatidylethanolamine from CDP-diacylglycerol: step 2/2. Functionally, catalyzes the formation of phosphatidylethanolamine (PtdEtn) from phosphatidylserine (PtdSer). This is Phosphatidylserine decarboxylase proenzyme from Rhodopseudomonas palustris (strain ATCC BAA-98 / CGA009).